The chain runs to 238 residues: Large ribosomal subunit protein uL1 (238 aa).

The protein belongs to the universal ribosomal protein uL1 family. Part of the 50S ribosomal subunit.

Its function is as follows. Binds directly to 23S rRNA. The L1 stalk is quite mobile in the ribosome, and is involved in E site tRNA release. In terms of biological role, protein L1 is also a translational repressor protein, it controls the translation of the L11 operon by binding to its mRNA. In Trichormus variabilis (strain ATCC 29413 / PCC 7937) (Anabaena variabilis), this protein is Large ribosomal subunit protein uL1.